The sequence spans 901 residues: Nuclear factor of activated T-cells, cytoplasmic 4 (901 aa).

Disordered regions lie at residues 15 to 179 (LVFG…LSSW) and 203 to 362 (NEAA…EDSV). Residues 61-81 (IPRPPPPRPGMHSPPPRPAPS) show a composition bias toward pro residues. Residues 96–109 (GGPGGNAGGAGGGR) show a composition bias toward gly residues. The segment at 114–119 (PSIRIT) is calcineurin-binding. Low complexity predominate over residues 114–123 (PSIRITSISP). Residues 151–165 (GFGGYREAGGQGGGA) show a composition bias toward gly residues. A compositionally biased stretch (low complexity) spans 166–179 (FFSPSPGSSSLSSW). Phosphoserine; by MAPK7 and MAPK14 is present on residues Ser-168 and Ser-170. Phosphoserine; by MAPK8 and MAPK9 is present on residues Ser-213 and Ser-217. The stretch at 213–229 (SPLPSPRASPRPWTPED) is one SP 1 repeat. The segment at 213-293 (SPLPSPRASP…LSRRGSLGEE (81 aa)) is 2 approximate SP repeats. Composition is skewed to pro residues over residues 215 to 227 (LPSP…PWTP) and 254 to 263 (GPVPASPRPA). The Nuclear localization signal signature appears at 268–270 (KRR). Residues 272-288 (SSSGTPSSASPALSRRG) are compositionally biased toward low complexity. One copy of the SP 2; approximate repeat lies at 277-293 (PSSASPALSRRGSLGEE). Ser-289 is modified (phosphoserine). Ser-334 is modified (phosphoserine; by RPS6KA3). At Ser-344 the chain carries Phosphoserine. Residues 401–582 (SALPPLDWPL…VPIECSQRSA (182 aa)) form the RHD domain. A DNA-binding region spans residues 430-437 (RAHYETEG). Residues 586–683 (PQVETYSPSA…KRSPTQSFKF (98 aa)) enclose the IPT/TIG domain. Residues 672–674 (RRK) carry the Nuclear localization signal motif. Lys-689 participates in a covalent cross-link: Glycyl lysine isopeptide (Lys-Gly) (interchain with G-Cter in SUMO2). 2 disordered regions span residues 695 to 721 (DSSL…PRPP) and 827 to 869 (PQSA…FRDS).

Member of the multicomponent NFATC transcription complex that consists of at least two components, a pre-existing cytoplasmic component NFATC2 and an inducible nuclear component NFATC1. Other NFAT proteins, such as NFATC3, or members of the activating protein-1 (AP-1) family and MAF can also bind the complex. NFAT proteins can bind DNA as monomers or dimers. Component of a promoter-binding complex composed of STAT3, NFATC3 and NFATC4; complex formation is enhanced by calcineurin. Interacts with CREBBP; this interaction potentiates transcription activation. Interacts with MAPK8/JNK1 and MAPK9/JNK2. Interacts with GATA4 (via the second Zn finger). Interacts (via N-terminus) with IRAK1 (via C-terminus). Interacts with RPS6KA3. Interacts with HOMER1, HOMER2 and HOMER3; this interaction competes with calcineurin/PPP3CA-binding and hence prevents NFATC4 dephosphorylation and activation. Interacts with ESR1 and ESR2; this interaction decreases NFATC4 transcriptional activity. Interacts with MTOR and MAPK7/ERK5. Interacts with TRIM17; this interaction prevents NFATC3 nuclear localization. Interacts with TCF25 (via C-terminus); the interaction leads to suppression of NFATC4 transcription factor activity and is reduced following stimulation with angiotensin-2. Post-translationally, phosphorylated by NFATC-kinases; dephosphorylated by calcineurin/PPP3CA. Phosphorylated on Ser-168 and Ser-170 by MTOR, IRAK1, MAPK7/ERK5 and MAPK14/p38, on Ser-213 and Ser-217 by MAPK8 and MAPK9, and on Ser-289 and Ser-344 by RPS6KA3. Phosphorylated by GSK3B. Phosphorylation by GSK3B markedly increases NFATC4 ubiquitination. Phosphorylation by MAPK8/JNK1, MAPK9/JNK2 and RPS6KA3 may stimulate NFATC4 transcriptional activity. Phosphorylation at Ser-168 and Ser-170 is stimulated by UV irradiation. Ubiquitinated, leading to degradation by the proteasome. Ubiquitination may be stimulated by GSK3B-dependent phosphorylation. Polyubiquitin linkage mainly occurs through 'Lys-48'. In terms of tissue distribution, widely expressed. In the brain, expressed in neurons. Expressed in the hippocampus (at protein level). In the hippocampus, expressed in both the CA1-CA3 pyramidal cells and the dentate gyrus granular cells. Expressed in a subset of hippocampal cells representing adult-born neurons (at protein level). Expressed in the submandibular gland (at protein level). In the olfactory system, expressed at low levels in the glomerular and granular layers and in the mitral cell layer. In the cerebellum, expressed at moderate levels in granular neurons. Expressed at moderate levels in the choroid plexus and ependymal cells. Expressed in neurons of the cochlear nucleus (at protein level). Expressed at low levels in the heart (at protein level). Expressed in ventricular cardiomyocytes (at protein level). Expressed in the lung.

Its subcellular location is the cytoplasm. The protein localises to the nucleus. Functionally, ca(2+)-regulated transcription factor that is involved in several processes, including the development and function of the immune, cardiovascular, musculoskeletal, and nervous systems. Involved in T-cell activation, stimulating the transcription of cytokine genes, including that of IL2 and IL4. Following JAK/STAT signaling activation and as part of a complex with NFATC3 and STAT3, binds to the alpha-beta E4 promoter region of CRYAB and activates transcription in cardiomyocytes. Along with NFATC3, involved in embryonic heart development. Involved in mitochondrial energy metabolism required for cardiac morphogenesis and function. Transactivates many genes involved in heart physiology. Along with GATA4, binds to and activates NPPB/BNP promoter. Activates NPPA/ANP/ANF and MYH7/beta-MHC transcription. Binds to and transactivates AGTR2 gene promoter. Involved in the regulation of adult hippocampal neurogenesis. Involved in BDNF-driven pro-survival signaling in hippocampal adult-born neurons. Involved in the formation of long-term spatial memory and long-term potentiation. In cochlear nucleus neurons, may play a role in deafferentation-induced apoptosis during a developmental critical period when auditory neurons depend on afferent input for survival. Binds to and activates the BACE1/Beta-secretase 1 promoter, hence may regulate the proteolytic processing of the amyloid precursor protein (APP). Plays a role in adipocyte differentiation. May be involved in myoblast differentiation into myotubes. Binds the consensus DNA sequence 5'-GGAAAAT-3'. In the presence of CREBBP, activates TNF transcription. Binds to PPARG gene promoter and regulates its activity. Binds to PPARG and REG3G gene promoters. In Mus musculus (Mouse), this protein is Nuclear factor of activated T-cells, cytoplasmic 4.